Here is a 151-residue protein sequence, read N- to C-terminus: UPF0178 protein ESA_02916 (151 aa).

It belongs to the UPF0178 family.

This chain is UPF0178 protein ESA_02916, found in Cronobacter sakazakii (strain ATCC BAA-894) (Enterobacter sakazakii).